Consider the following 479-residue polypeptide: ATP-dependent RNA helicase DDX19B (479 aa).

N-acetylalanine is present on Ala-2. The segment at Ala-2 to Glu-300 is N-terminal lobe. A disordered region spans residues Thr-34 to Glu-54. Residues Asp-55–Ser-68 form an N-terminal helix region. The Q motif signature appears at Lys-92–Glu-120. Residues Gln-119 and Ser-138–Thr-145 contribute to the ATP site. Positions Leu-125–Ile-295 constitute a Helicase ATP-binding domain. The DEAD box motif lies at Asp-242–Asp-245. The C-terminal lobe stretch occupies residues Glu-301–Asn-479. A Helicase C-terminal domain is found at Thr-306–Ile-474. ATP-binding residues include Arg-429 and Arg-432.

This sequence belongs to the DEAD box helicase family. DDX19/DBP5 subfamily. Associates with the nuclear pore complex via interaction with NUP214. Interacts with NUP214 or RNA in a mutually exclusive manner.

It is found in the cytoplasm. Its subcellular location is the nucleus. It localises to the nucleoplasm. It carries out the reaction ATP + H2O = ADP + phosphate + H(+). Functionally, ATP-dependent RNA helicase involved in mRNA export from the nucleus. Rather than unwinding RNA duplexes, DDX19B functions as a remodeler of ribonucleoprotein particles, whereby proteins bound to nuclear mRNA are dissociated and replaced by cytoplasmic mRNA binding proteins. In Homo sapiens (Human), this protein is ATP-dependent RNA helicase DDX19B (DDX19B).